A 154-amino-acid chain; its full sequence is Aspartate carbamoyltransferase regulatory chain (154 aa).

Residues cysteine 109, cysteine 114, cysteine 138, and cysteine 141 each contribute to the Zn(2+) site.

Belongs to the PyrI family. In terms of assembly, contains catalytic and regulatory chains. Zn(2+) serves as cofactor.

Its function is as follows. Involved in allosteric regulation of aspartate carbamoyltransferase. This is Aspartate carbamoyltransferase regulatory chain from Aeromonas hydrophila subsp. hydrophila (strain ATCC 7966 / DSM 30187 / BCRC 13018 / CCUG 14551 / JCM 1027 / KCTC 2358 / NCIMB 9240 / NCTC 8049).